The following is a 305-amino-acid chain: Putative UDP-glucose 4-epimerase (305 aa).

Residues 10–11 (FI), 30–35 (DNLTTG), 50–51 (DI), and 71–75 (QAAQI) each bind NAD(+). Substrate contacts are provided by Ser-115 and Tyr-140. Residues Tyr-140 and Lys-144 each coordinate NAD(+). Tyr-140 acts as the Proton acceptor in catalysis. Residues Asn-169, 183–184 (VI), 198–200 (IIF), Arg-207, and 263–266 (REGE) contribute to the substrate site.

It belongs to the NAD(P)-dependent epimerase/dehydratase family. It depends on NAD(+) as a cofactor.

It catalyses the reaction UDP-alpha-D-glucose = UDP-alpha-D-galactose. It functions in the pathway carbohydrate metabolism; galactose metabolism. Its function is as follows. Involved in the metabolism of galactose. Catalyzes the conversion of UDP-galactose (UDP-Gal) to UDP-glucose (UDP-Glc) through a mechanism involving the transient reduction of NAD. This is Putative UDP-glucose 4-epimerase from Methanocaldococcus jannaschii (strain ATCC 43067 / DSM 2661 / JAL-1 / JCM 10045 / NBRC 100440) (Methanococcus jannaschii).